The chain runs to 420 residues: UDP-N-acetylglucosamine 1-carboxyvinyltransferase (420 aa).

22–23 (KN) contributes to the phosphoenolpyruvate binding site. A UDP-N-acetyl-alpha-D-glucosamine-binding site is contributed by Arg-92. Cys-116 (proton donor) is an active-site residue. A 2-(S-cysteinyl)pyruvic acid O-phosphothioketal modification is found at Cys-116. Residues 121-125 (RPVDQ), Asp-304, and Ile-326 contribute to the UDP-N-acetyl-alpha-D-glucosamine site.

It belongs to the EPSP synthase family. MurA subfamily.

Its subcellular location is the cytoplasm. It catalyses the reaction phosphoenolpyruvate + UDP-N-acetyl-alpha-D-glucosamine = UDP-N-acetyl-3-O-(1-carboxyvinyl)-alpha-D-glucosamine + phosphate. Its pathway is cell wall biogenesis; peptidoglycan biosynthesis. Cell wall formation. Adds enolpyruvyl to UDP-N-acetylglucosamine. The protein is UDP-N-acetylglucosamine 1-carboxyvinyltransferase of Paraburkholderia phytofirmans (strain DSM 17436 / LMG 22146 / PsJN) (Burkholderia phytofirmans).